A 262-amino-acid polypeptide reads, in one-letter code: Adenosylcobinamide-GDP ribazoletransferase (262 aa).

6 helical membrane passes run 43 to 63 (YFGLVGLLVGLLSAIVFWLTQ), 66 to 86 (LPAGVSVLLSMVTGVLLTGGF), 120 to 140 (GALALMLVLMLKWQLLVELAL), 146 to 166 (AGSAMIVAHTVSRVVAASLIF), 191 to 211 (LFILIASGVLVLLVLKGIAAL), and 242 to 262 (AAQQICEIVCYFVLLVVGSIL).

It belongs to the CobS family. The cofactor is Mg(2+).

It localises to the cell inner membrane. It carries out the reaction alpha-ribazole + adenosylcob(III)inamide-GDP = adenosylcob(III)alamin + GMP + H(+). It catalyses the reaction alpha-ribazole 5'-phosphate + adenosylcob(III)inamide-GDP = adenosylcob(III)alamin 5'-phosphate + GMP + H(+). It participates in cofactor biosynthesis; adenosylcobalamin biosynthesis; adenosylcobalamin from cob(II)yrinate a,c-diamide: step 7/7. In terms of biological role, joins adenosylcobinamide-GDP and alpha-ribazole to generate adenosylcobalamin (Ado-cobalamin). Also synthesizes adenosylcobalamin 5'-phosphate from adenosylcobinamide-GDP and alpha-ribazole 5'-phosphate. In Shewanella sp. (strain ANA-3), this protein is Adenosylcobinamide-GDP ribazoletransferase.